A 256-amino-acid polypeptide reads, in one-letter code: Type III pantothenate kinase (256 aa).

6–13 (DIGNSSIV) contributes to the ATP binding site. Residues Tyr-101 and 108–111 (GADR) contribute to the substrate site. Asp-110 functions as the Proton acceptor in the catalytic mechanism. K(+) is bound at residue Asp-130. Thr-133 contacts ATP. Thr-185 serves as a coordination point for substrate.

The protein belongs to the type III pantothenate kinase family. As to quaternary structure, homodimer. It depends on NH4(+) as a cofactor. K(+) is required as a cofactor.

It is found in the cytoplasm. It catalyses the reaction (R)-pantothenate + ATP = (R)-4'-phosphopantothenate + ADP + H(+). It participates in cofactor biosynthesis; coenzyme A biosynthesis; CoA from (R)-pantothenate: step 1/5. Catalyzes the phosphorylation of pantothenate (Pan), the first step in CoA biosynthesis. The chain is Type III pantothenate kinase from Shouchella clausii (strain KSM-K16) (Alkalihalobacillus clausii).